Here is a 535-residue protein sequence, read N- to C-terminus: UDP-glucuronosyltransferase 1A1 (535 aa).

The first 29 residues, 1 to 29 (MTVVCWSSRLLLLLPYLLLCVFGPSASHA), serve as a signal peptide directing secretion. Residues asparagine 89, asparagine 297, and asparagine 435 are each glycosylated (N-linked (GlcNAc...) asparagine). Residues 493–509 (VIGFLLAIVLTVVFIVF) traverse the membrane as a helical segment.

Belongs to the UDP-glycosyltransferase family. Homodimers. Homooligomer. Interacts with UGT1A3, UGT1A4, UGT1A6, UGT1A7, UGT1A8, UGT1A9 and UGT1A10 to form heterodimers. Highly expressed in liver and at lower levels in colon, kidney, stomach and intestine.

The protein localises to the endoplasmic reticulum membrane. The catalysed reaction is glucuronate acceptor + UDP-alpha-D-glucuronate = acceptor beta-D-glucuronoside + UDP + H(+). It carries out the reaction 17beta-estradiol + UDP-alpha-D-glucuronate = 17beta-estradiol 3-O-(beta-D-glucuronate) + UDP + H(+). The enzyme catalyses 2-hydroxyestrone + UDP-alpha-D-glucuronate = 2-hydroxyestrone 3-O-(beta-D-glucuronate) + UDP + H(+). It catalyses the reaction 2-hydroxy-17beta-estradiol + UDP-alpha-D-glucuronate = 2-hydroxy-17beta-estradiol 3-O-(beta-D-glucuronate) + UDP + H(+). The catalysed reaction is 2-methoxy-17beta-estradiol + UDP-alpha-D-glucuronate = 2-methoxy-17beta-estradiol 3-O-(beta-D-glucuronate) + UDP + H(+). It carries out the reaction 17alpha-estradiol + UDP-alpha-D-glucuronate = 17alpha-estradiol 3-O-(beta-D-glucuronate) + UDP + H(+). The enzyme catalyses 16beta,17beta-estriol + UDP-alpha-D-glucuronate = 16beta,17beta-estriol 16-O-(beta-D-glucuronate) + UDP + H(+). It catalyses the reaction losartan + UDP-alpha-D-glucuronate = losartan-2-N-beta-D-glucuronide + UDP. The catalysed reaction is prunetin + UDP-alpha-D-glucuronate = prunetin-4'-O-beta-D-glucuronide + UDP. It carries out the reaction SN-38 + UDP-alpha-D-glucuronate = SN-38 O-beta-D-glucuronide + UDP + H(+). The enzyme catalyses (4Z,15Z)-bilirubin IXalpha + UDP-alpha-D-glucuronate = (4Z,15Z)-bilirubin IXalpha C12-beta-D-glucuronoside + UDP. It catalyses the reaction (4Z,15Z)-bilirubin IXalpha + UDP-alpha-D-glucuronate = (4Z,15Z)-bilirubin IXalpha C8-beta-D-glucuronoside + UDP. The catalysed reaction is (4Z,15Z)-bilirubin IXalpha C8-beta-D-glucuronoside + UDP-alpha-D-glucuronate = (4Z,15Z)-bilirubin IXalpha C8,C12-beta-D-bisglucuronoside + UDP. It carries out the reaction (4Z,15Z)-bilirubin IXalpha C12-beta-D-glucuronoside + UDP-alpha-D-glucuronate = (4Z,15Z)-bilirubin IXalpha C8,C12-beta-D-bisglucuronoside + UDP. The enzyme catalyses 8-iso-prostaglandin F2alpha + UDP-alpha-D-glucuronate = 8-iso-prostaglandin F2alpha-glucuronide + UDP + H(+). It catalyses the reaction (5Z,8Z,11Z,14Z)-eicosatetraenoate + UDP-alpha-D-glucuronate = O-[(5Z),(8Z),(11Z),(14Z)-eicosatetraenoyl]-beta-D-glucuronate + UDP. The catalysed reaction is 15-hydroxy-(5Z,8Z,11Z,13E)-eicosatetraenoate + UDP-alpha-D-glucuronate = 15-O-(beta-D-glucuronosyl)-(5Z,8Z,11Z,14Z)-eicosatetraenoate + UDP + H(+). It carries out the reaction 20-hydroxy-(5Z,8Z,11Z,14Z)-eicosatetraenoate + UDP-alpha-D-glucuronate = 20-O-(beta-D-glucuronosyl)-(5Z,8Z,11Z,14Z)-eicosatetraenoate + UDP + H(+). The enzyme catalyses prostaglandin B1 + UDP-alpha-D-glucuronate = 15-O-(beta-D-glucuronosyl)-prostaglandin B1 + UDP + H(+). It catalyses the reaction (E)-ferulate + UDP-alpha-D-glucuronate = (E)-4-O-(beta-D-glucuronosyl)-ferulate + UDP + H(+). The catalysed reaction is (E)-ferulate + UDP-alpha-D-glucuronate = (E)-ferulic acid beta-D-glucuronate ester + UDP. Its function is as follows. UDP-glucuronosyltransferase (UGT) that catalyzes phase II biotransformation reactions in which lipophilic substrates are conjugated with glucuronic acid to increase the metabolite's water solubility, thereby facilitating excretion into either the urine or bile. Essential for the elimination and detoxification of drugs, xenobiotics and endogenous compounds. Catalyzes the glucuronidation of endogenous estrogen hormones such as estradiol, estrone and estriol. Involved in the glucuronidation of bilirubin, a degradation product occurring in the normal catabolic pathway that breaks down heme in vertebrates. Involved in the glucuronidation of arachidonic acid (AA) and AA-derived eicosanoids including 15-HETE, 20-HETE, PGB1 and F2-isoprostane (8-iso-PGF2alpha). Involved in the glucuronidation of the phytochemical ferulic acid at the phenolic or the carboxylic acid group. Also catalyzes the glucuronidation the isoflavones genistein, daidzein, glycitein, formononetin, biochanin A and prunetin, which are phytoestrogens with anticancer and cardiovascular properties. Involved in the glucuronidation of the AGTR1 angiotensin receptor antagonist losartan, a drug which can inhibit the effect of angiotensin II. Involved in the biotransformation of 7-ethyl-10-hydroxycamptothecin (SN-38), the pharmacologically active metabolite of the anticancer drug irinotecan. This is UDP-glucuronosyltransferase 1A1 from Mus musculus (Mouse).